We begin with the raw amino-acid sequence, 331 residues long: Uroporphyrinogen decarboxylase (331 aa).

Substrate-binding positions include Arg-22–Arg-26, Asp-71, Tyr-145, Ser-199, and His-308.

This sequence belongs to the uroporphyrinogen decarboxylase family. In terms of assembly, homodimer.

The protein resides in the cytoplasm. The enzyme catalyses uroporphyrinogen III + 4 H(+) = coproporphyrinogen III + 4 CO2. It participates in porphyrin-containing compound metabolism; protoporphyrin-IX biosynthesis; coproporphyrinogen-III from 5-aminolevulinate: step 4/4. Catalyzes the decarboxylation of four acetate groups of uroporphyrinogen-III to yield coproporphyrinogen-III. The protein is Uroporphyrinogen decarboxylase of Picrophilus torridus (strain ATCC 700027 / DSM 9790 / JCM 10055 / NBRC 100828 / KAW 2/3).